A 401-amino-acid polypeptide reads, in one-letter code: Imidazolonepropionase (401 aa).

2 residues coordinate Fe(3+): histidine 70 and histidine 72. 2 residues coordinate Zn(2+): histidine 70 and histidine 72. 4-imidazolone-5-propanoate-binding residues include arginine 79, tyrosine 142, and histidine 175. N-formimidoyl-L-glutamate is bound at residue tyrosine 142. Residue histidine 240 participates in Fe(3+) binding. Histidine 240 lines the Zn(2+) pocket. Glutamine 243 is a binding site for 4-imidazolone-5-propanoate. Residue aspartate 315 participates in Fe(3+) binding. Aspartate 315 is a Zn(2+) binding site. N-formimidoyl-L-glutamate contacts are provided by asparagine 317 and glycine 319. Threonine 320 is a binding site for 4-imidazolone-5-propanoate.

This sequence belongs to the metallo-dependent hydrolases superfamily. HutI family. Requires Zn(2+) as cofactor. The cofactor is Fe(3+).

The protein resides in the cytoplasm. The enzyme catalyses 4-imidazolone-5-propanoate + H2O = N-formimidoyl-L-glutamate. It functions in the pathway amino-acid degradation; L-histidine degradation into L-glutamate; N-formimidoyl-L-glutamate from L-histidine: step 3/3. Its function is as follows. Catalyzes the hydrolytic cleavage of the carbon-nitrogen bond in imidazolone-5-propanoate to yield N-formimidoyl-L-glutamate. It is the third step in the universal histidine degradation pathway. This is Imidazolonepropionase from Caulobacter vibrioides (strain ATCC 19089 / CIP 103742 / CB 15) (Caulobacter crescentus).